Consider the following 419-residue polypeptide: Serine--tRNA ligase (419 aa).

226 to 228 serves as a coordination point for L-serine; that stretch reads TSE. ATP-binding positions include 257 to 259 and Val273; that span reads RRE. An L-serine-binding site is contributed by Glu280. ATP is bound at residue 344–347; that stretch reads ELTS. Residue Thr379 coordinates L-serine.

The protein belongs to the class-II aminoacyl-tRNA synthetase family. Type-1 seryl-tRNA synthetase subfamily. In terms of assembly, homodimer. The tRNA molecule binds across the dimer.

Its subcellular location is the cytoplasm. It catalyses the reaction tRNA(Ser) + L-serine + ATP = L-seryl-tRNA(Ser) + AMP + diphosphate + H(+). The enzyme catalyses tRNA(Sec) + L-serine + ATP = L-seryl-tRNA(Sec) + AMP + diphosphate + H(+). The protein operates within aminoacyl-tRNA biosynthesis; selenocysteinyl-tRNA(Sec) biosynthesis; L-seryl-tRNA(Sec) from L-serine and tRNA(Sec): step 1/1. Functionally, catalyzes the attachment of serine to tRNA(Ser). Is also able to aminoacylate tRNA(Sec) with serine, to form the misacylated tRNA L-seryl-tRNA(Sec), which will be further converted into selenocysteinyl-tRNA(Sec). The sequence is that of Serine--tRNA ligase from Mycobacterium marinum (strain ATCC BAA-535 / M).